The sequence spans 366 residues: tRNA-specific 2-thiouridylase MnmA (366 aa).

ATP is bound by residues 6–13 (AMSGGVDS) and L32. Catalysis depends on C101, which acts as the Nucleophile. A disulfide bridge links C101 with C199. G125 is a binding site for ATP. An interaction with tRNA region spans residues 148–150 (KDQ). The active-site Cysteine persulfide intermediate is the C199.

Belongs to the MnmA/TRMU family.

The protein localises to the cytoplasm. It catalyses the reaction S-sulfanyl-L-cysteinyl-[protein] + uridine(34) in tRNA + AH2 + ATP = 2-thiouridine(34) in tRNA + L-cysteinyl-[protein] + A + AMP + diphosphate + H(+). Its function is as follows. Catalyzes the 2-thiolation of uridine at the wobble position (U34) of tRNA, leading to the formation of s(2)U34. The protein is tRNA-specific 2-thiouridylase MnmA of Leifsonia xyli subsp. xyli (strain CTCB07).